Reading from the N-terminus, the 611-residue chain is Methionine--tRNA ligase (611 aa).

The short motif at 12 to 22 (PYANGPRHIGH) is the 'HIGH' region element. Zn(2+) contacts are provided by Cys144, Cys147, Cys157, and Cys160. The 'KMSKS' region signature appears at 348 to 352 (KFSSS). ATP is bound at residue Ser351.

Belongs to the class-I aminoacyl-tRNA synthetase family. MetG type 1 subfamily. Monomer. It depends on Zn(2+) as a cofactor.

It localises to the cytoplasm. The enzyme catalyses tRNA(Met) + L-methionine + ATP = L-methionyl-tRNA(Met) + AMP + diphosphate. In terms of biological role, is required not only for elongation of protein synthesis but also for the initiation of all mRNA translation through initiator tRNA(fMet) aminoacylation. This is Methionine--tRNA ligase from Corynebacterium urealyticum (strain ATCC 43042 / DSM 7109).